Consider the following 417-residue polypeptide: Imidazolonepropionase (417 aa).

H77 and H79 together coordinate Fe(3+). Zn(2+) is bound by residues H77 and H79. 4-imidazolone-5-propanoate contacts are provided by R86, Y149, and H182. Y149 provides a ligand contact to N-formimidoyl-L-glutamate. A Fe(3+)-binding site is contributed by H244. Position 244 (H244) interacts with Zn(2+). E247 is a 4-imidazolone-5-propanoate binding site. A Fe(3+)-binding site is contributed by D323. A Zn(2+)-binding site is contributed by D323. N325 is a binding site for N-formimidoyl-L-glutamate.

Belongs to the metallo-dependent hydrolases superfamily. HutI family. It depends on Zn(2+) as a cofactor. The cofactor is Fe(3+).

It is found in the cytoplasm. The catalysed reaction is 4-imidazolone-5-propanoate + H2O = N-formimidoyl-L-glutamate. Its pathway is amino-acid degradation; L-histidine degradation into L-glutamate; N-formimidoyl-L-glutamate from L-histidine: step 3/3. Functionally, catalyzes the hydrolytic cleavage of the carbon-nitrogen bond in imidazolone-5-propanoate to yield N-formimidoyl-L-glutamate. It is the third step in the universal histidine degradation pathway. In Halobacterium salinarum (strain ATCC 29341 / DSM 671 / R1), this protein is Imidazolonepropionase.